Here is an 802-residue protein sequence, read N- to C-terminus: E3 ubiquitin-protein ligase UHRF2 (802 aa).

Positions Met-1–Asp-78 constitute a Ubiquitin-like domain. Disordered stretches follow at residues Leu-80–Arg-116 and Arg-153–Asn-197. Polar residues-rich tracts occupy residues Gly-82 to Pro-96, Arg-153 to Asn-177, and Lys-188 to Asn-197. The tract at residues Ala-117–Pro-311 is required for interaction with histone H3. The interaction with PCNP stretch occupies residues Ser-194–Gly-288. The PHD-type zinc-finger motif lies at Ser-344 to Asp-395. The methyl-CpG binding and interaction with HDAC1 stretch occupies residues Lys-414–Asp-644. The 165-residue stretch at Gly-448–Arg-612 folds into the YDG domain. The disordered stretch occupies residues Gly-640–Ala-674. At Ser-667 the chain carries Phosphoserine. The segment at Cys-733–Arg-772 adopts an RING-type zinc-finger fold.

Homodimer; disulfide-linked. Binds methylated CpG containing oligonucleotides. Interacts with H3; the interaction has a preference for the 'Lys-9' trimethylated form of H3 (H3K9me3). Interacts with PCNP. Interacts with HDAC1. Interacts directly with CCNE1; the interaction ubiquitinates CCNE1 and appears independent of CCNE1 phosphorylation. Interacts with CCND1; the interaction ubiquitinates CCND1 and appears independent of CCND1 phosphorylation. Interacts with p53/TP53 and RB1. Interacts with UBE2I. Interacts with ZNF618. Interacts with UHRF1. Interacts with FANCD2. Interacts with ATR. Interacts with PCNA. In terms of processing, may be autoubiquitinated; which may lead to proteasomal degradation. Phosphorylated. Phosphorylation may be mediated by CDK2. Post-translationally, autosumoylated.

It localises to the nucleus. The protein resides in the chromosome. The catalysed reaction is S-ubiquitinyl-[E2 ubiquitin-conjugating enzyme]-L-cysteine + [acceptor protein]-L-lysine = [E2 ubiquitin-conjugating enzyme]-L-cysteine + N(6)-ubiquitinyl-[acceptor protein]-L-lysine.. Its pathway is protein modification; protein ubiquitination. E3 ligase activity is robustly activated by 5-hydroxymethylcytosine. E3 ubiquitin ligase that plays important roles in DNA methylation, histone modifications, cell cycle and DNA repair. Acts as a specific reader for 5-hydroxymethylcytosine (5hmC) and thereby recruits various substrates to these sites to ubiquitinate them. This activity also allows the maintenance of 5mC levels at specific genomic loci and regulates neuron-related gene expression. Participates in cell cycle regulation by ubiquitinating cyclins CCND1 and CCNE1 and thereby inducing G1 arrest. Also ubiquitinates PCNP leading to its degradation by the proteasome. Plays an active role in DNA damage repair by ubiquitinating p21/CDKN1A leading to its proteasomal degradation. Also promotes DNA repair by acting as an interstrand cross-links (ICLs) sensor. Mechanistically, cooperates with UHRF1 to ensure recruitment of FANCD2 to ICLs, leading to FANCD2 monoubiquitination and subsequent activation. Contributes to UV-induced DNA damage response by physically interacting with ATR in response to irradiation, thereby promoting ATR activation. The sequence is that of E3 ubiquitin-protein ligase UHRF2 (UHRF2) from Homo sapiens (Human).